The following is a 499-amino-acid chain: Flotillin-like protein 2 (499 aa).

Cys-37 carries the S-palmitoyl cysteine lipid modification. Positions 243–319 form a coiled coil; the sequence is LREEAKVKAE…LRLTEKLKAE (77 aa).

This sequence belongs to the band 7/mec-2 family. Flotillin subfamily. May be palmitoylated.

The protein resides in the cell membrane. It localises to the membrane. The protein localises to the caveola. Its function is as follows. May act as a scaffolding protein within caveolar membranes, functionally participating in formation of caveolae or caveolae-like vesicles. This chain is Flotillin-like protein 2 (FLOT2), found in Oryza sativa subsp. japonica (Rice).